The primary structure comprises 266 residues: Ribonuclease HII (266 aa).

Residues 19–38 (HPGMIRDKEKPAPTKPGKGV) form a disordered region. One can recognise an RNase H type-2 domain in the interval 58 to 246 (WPVAGCDEAG…VVAARQKHQP (189 aa)). A divalent metal cation-binding residues include aspartate 64, glutamate 65, and aspartate 155.

Belongs to the RNase HII family. Mn(2+) serves as cofactor. Requires Mg(2+) as cofactor.

Its subcellular location is the cytoplasm. It catalyses the reaction Endonucleolytic cleavage to 5'-phosphomonoester.. Endonuclease that specifically degrades the RNA of RNA-DNA hybrids. In Rhodopseudomonas palustris (strain BisB18), this protein is Ribonuclease HII.